A 116-amino-acid chain; its full sequence is Putative membrane protein (116 aa).

A helical transmembrane segment spans residues 13–33 (VISIITFILVIAIFVIEIVSC).

The protein resides in the host membrane. The polypeptide is Putative membrane protein (Alethinophid 1 reptarenavirus (isolate AlRrV1/Boa/USA/BC/2009) (Golden Gate virus)).